A 110-amino-acid chain; its full sequence is Large ribosomal subunit protein uL22 (110 aa).

The protein belongs to the universal ribosomal protein uL22 family. In terms of assembly, part of the 50S ribosomal subunit.

Functionally, this protein binds specifically to 23S rRNA; its binding is stimulated by other ribosomal proteins, e.g. L4, L17, and L20. It is important during the early stages of 50S assembly. It makes multiple contacts with different domains of the 23S rRNA in the assembled 50S subunit and ribosome. In terms of biological role, the globular domain of the protein is located near the polypeptide exit tunnel on the outside of the subunit, while an extended beta-hairpin is found that lines the wall of the exit tunnel in the center of the 70S ribosome. The polypeptide is Large ribosomal subunit protein uL22 (Citrobacter koseri (strain ATCC BAA-895 / CDC 4225-83 / SGSC4696)).